Here is a 333-residue protein sequence, read N- to C-terminus: Ferrochelatase (333 aa).

Residues His-202 and Glu-284 each contribute to the Fe cation site.

This sequence belongs to the ferrochelatase family.

The protein localises to the cytoplasm. The enzyme catalyses heme b + 2 H(+) = protoporphyrin IX + Fe(2+). Its pathway is porphyrin-containing compound metabolism; protoheme biosynthesis; protoheme from protoporphyrin-IX: step 1/1. Catalyzes the ferrous insertion into protoporphyrin IX. The chain is Ferrochelatase from Francisella tularensis subsp. tularensis (strain FSC 198).